The chain runs to 188 residues: Guanylate kinase (188 aa).

A Guanylate kinase-like domain is found at 4–183; the sequence is RNIVVLTAPS…AVEETLTRIR (180 aa). 11–18 serves as a coordination point for ATP; sequence APSGAGKT.

It belongs to the guanylate kinase family.

The protein localises to the cytoplasm. The enzyme catalyses GMP + ATP = GDP + ADP. In terms of biological role, essential for recycling GMP and indirectly, cGMP. The protein is Guanylate kinase of Salinibacter ruber (strain DSM 13855 / M31).